Consider the following 389-residue polypeptide: SH2 domain-containing protein 2A (389 aa).

The tract at residues 41-63 (AASPQAPEAASNTGNAERAEEVP) is disordered. The SH2 domain maps to 95–186 (WFHGFITRRE…PYGETLTEPL (92 aa)). The disordered stretch occupies residues 190–295 (TPEPAGLSLR…PIAFYAMGRG (106 aa)). Residues 203 to 216 (SNFGSKSQDPNPQY) are compositionally biased toward polar residues. S217 carries the post-translational modification Phosphoserine. Short sequence motifs (SH3-binding) lie at residues 244–250 (RPKPPIP) and 272–278 (RPKPSNP). Over residues 245–256 (PKPPIPAKPQLP) the composition is skewed to pro residues. Phosphoserine is present on S296. Residues 324–389 (KSWSRPVPGG…QAWLPLGPPQ (66 aa)) are disordered. Residues 337-348 (GGSQLHSENSVI) are compositionally biased toward polar residues. A compositionally biased stretch (pro residues) spans 352–361 (PPLPHQPPPA).

As to quaternary structure, interacts with KDR. Interacts with TXK and ITK. In terms of processing, phosphorylated on tyrosine residues. As to expression, expression limited to tissues of the immune system and, in particular, activated T-cells. Expressed in peripheral blood leukocytes, thymus and spleen. Much lower expression or undetectable, in brain, placenta, skeletal muscle, prostate, testis, ovary, small intestine, and colon. Expressed at low levels in unstimulated T-cells, but not expressed in normal resting or activated B-cells. According to PubMed:10692392, expression is not restricted to activated T-cells, but strongly expressed in blood cell lineages, the endothelium and other cell and tissue types, such as heart, lung, and liver.

The protein localises to the cytoplasm. Could be a T-cell-specific adapter protein involved in the control of T-cell activation. May play a role in the CD4-p56-LCK-dependent signal transduction pathway. Could also play an important role in normal and pathological angiogenesis. Could be an adapter protein that facilitates and regulates interaction of KDR with effector proteins important to endothelial cell survival and proliferation. This is SH2 domain-containing protein 2A (SH2D2A) from Homo sapiens (Human).